An 828-amino-acid polypeptide reads, in one-letter code: MKLSRRSFMKANAVAAAAAAAGLSVPGVARAVVGQQEAIKWDKAPCRFCGTGCGVLVGTQQGRVVACQGDPDAPVNRGLNCIKGYFLPKIMYGKDRLTQPLLRMKNGKYDKEGEFTPITWDQAFDVMEEKFKTALKEKGPESIGMFGSGQWTIWEGYAASKLFKAGFRSNNIDPNARHCMASAVVGFMRTFGMDEPMGCYDDIEQADAFVLWGANMAEMHPILWSRITNSRLSNQNVTVAVLSTYQHRSFELADNGIIFTPQSDLVILNYIANYIIQNNAINQDFFSKHVNLRKGATDIGYGLRPTHPLEKAAKNPGSDASEPMSFEDYKAFVAEYTLEKTAEMTGVPKDQLEQLAQLYADPNKKVISYWTMGFNQHTRGVWANNLVYNLHLLTGKISQPGCGPFSLTGQPSACGTAREVGTFAHRLPADMVVTNEKHRDICEKKWNIPSGTIPAKIGLHAVAQDRALKDGKLNVYWTMCTNNMQAGPNINEERMPGWRDPRNFIIVSDPYPTVSALAADLILPTAMWVEKEGAYGNAERRTQFWRQQVQAPGEAKSDLWQLVQFSRRFKTEEVWPEELLAKKPELRGKTLYEVLYATPEVSKFPVSELAEDQLNDESRELGFYRQKGLFEEYACFGRGHGHDLAPFDDYHKARVLRWPVVNGKETQWRYSEGNDPYVKAGEGYKFYGKPDGKAVIFALPFEPAAEAPDEEYDLWLSTGRVLEHWHTGSMTRRVPELHRAFPEAVLFIHPLDAKARDLRRGDKVKVVSRRGEVISIVETRGRNRPPQGLVYMPFFDAAQLVNKLTLDATDPLSKETDFKKCAVKLEKV.

Residues 1–31 constitute a signal peptide (tat-type signal); that stretch reads MKLSRRSFMKANAVAAAAAAAGLSVPGVARA. The 4Fe-4S Mo/W bis-MGD-type domain maps to 39-95; the sequence is IKWDKAPCRFCGTGCGVLVGTQQGRVVACQGDPDAPVNRGLNCIKGYFLPKIMYGKD. Positions 46, 49, 53, and 81 each coordinate [4Fe-4S] cluster. Mo-bis(molybdopterin guanine dinucleotide) is bound by residues K83, Q150, N175, C179, 212 to 219, 243 to 247, 262 to 264, M372, Q376, N482, 508 to 509, K531, D558, and 718 to 727; these read WGANMAEM, STYQH, QSD, SD, and TGRVLEHWHT. F794 provides a ligand contact to substrate. Positions 802 and 819 each coordinate Mo-bis(molybdopterin guanine dinucleotide).

The protein belongs to the prokaryotic molybdopterin-containing oxidoreductase family. NasA/NapA/NarB subfamily. As to quaternary structure, component of the periplasmic nitrate reductase NapAB complex composed of NapA and NapB. [4Fe-4S] cluster serves as cofactor. Mo-bis(molybdopterin guanine dinucleotide) is required as a cofactor. Predicted to be exported by the Tat system. The position of the signal peptide cleavage has not been experimentally proven.

It is found in the periplasm. It carries out the reaction 2 Fe(II)-[cytochrome] + nitrate + 2 H(+) = 2 Fe(III)-[cytochrome] + nitrite + H2O. Catalytic subunit of the periplasmic nitrate reductase complex NapAB. Receives electrons from NapB and catalyzes the reduction of nitrate to nitrite. In Shigella flexneri serotype 5b (strain 8401), this protein is Periplasmic nitrate reductase.